Reading from the N-terminus, the 76-residue chain is Small ribosomal subunit protein bS18 (76 aa).

The protein belongs to the bacterial ribosomal protein bS18 family. Part of the 30S ribosomal subunit. Forms a tight heterodimer with protein bS6.

Its function is as follows. Binds as a heterodimer with protein bS6 to the central domain of the 16S rRNA, where it helps stabilize the platform of the 30S subunit. The protein is Small ribosomal subunit protein bS18 of Xylella fastidiosa (strain M23).